The following is a 444-amino-acid chain: Homocysteine/cysteine synthase (444 aa).

Position 208 is an N6-(pyridoxal phosphate)lysine (Lys208).

This sequence belongs to the trans-sulfuration enzymes family. In terms of assembly, homotetramer. Pyridoxal 5'-phosphate is required as a cofactor.

It is found in the cytoplasm. The enzyme catalyses O-acetyl-L-homoserine + methanethiol = L-methionine + acetate + H(+). The catalysed reaction is O-acetyl-L-homoserine + hydrogen sulfide = L-homocysteine + acetate. It carries out the reaction O-acetyl-L-serine + hydrogen sulfide = L-cysteine + acetate. It functions in the pathway amino-acid biosynthesis; L-methionine biosynthesis via de novo pathway; L-homocysteine from O-acetyl-L-homoserine. The protein operates within amino-acid biosynthesis; L-cysteine biosynthesis; L-cysteine from L-serine: step 2/2. Functionally, catalyzes the conversion of O-acetyl-L-homoserine (OAH) into homocysteine in the methionine biosynthesis pathway. Also catalyzes the conversion of O-acetylserine (OAS) into cysteine, the last step in the cysteine biosynthesis pathway. In Kluyveromyces lactis (strain ATCC 8585 / CBS 2359 / DSM 70799 / NBRC 1267 / NRRL Y-1140 / WM37) (Yeast), this protein is Homocysteine/cysteine synthase (MET17).